The sequence spans 277 residues: UPF0276 protein PP_0992 (277 aa).

This sequence belongs to the UPF0276 family.

The sequence is that of UPF0276 protein PP_0992 from Pseudomonas putida (strain ATCC 47054 / DSM 6125 / CFBP 8728 / NCIMB 11950 / KT2440).